A 221-amino-acid polypeptide reads, in one-letter code: MFSFKVSRWMGLACFRSLVTSSPSIRQKKLMHKLQEEKAFREEMKIFREKIEDFREEMWTFRGKIRAFRGQILGFWEEERPFWEEEKSFWKEEKSFWEMEKSFREEEKTFWKKYRIFWKDDKAFWKEDNALWEKDRNLLQEDKALWEEEKALWVEERALLEEEKALWEDKTSLWEEENALWEEERAFWVESNGHIAREQMLEELHNANRGRRSLAFSRGRA.

A coiled-coil region spans residues 129–168; sequence NALWEKDRNLLQEDKALWEEEKALWVEERALLEEEKALWE.

The chain is Coiled-coil domain-containing protein 70 (CCDC70) from Macaca fascicularis (Crab-eating macaque).